We begin with the raw amino-acid sequence, 116 residues long: ANPSYAVVGHYTQIVWYKSDRIGCAAAYCPSSVYNYFYVCQYCPAGNFAGRTATPYKSGPPCGDCPSACDNGLCTNPCRVEDEFINCKDMAESRDCQDNYMMTNCAAFCSCHNEII.

An SCP domain is found at 4–42 (SYAVVGHYTQIVWYKSDRIGCAAAYCPSSVYNYFYVCQY). Disulfide bonds link Cys24–Cys40, Cys62–Cys69, Cys65–Cys74, Cys87–Cys105, and Cys96–Cys109. A ShKT domain is found at 78–111 (CRVEDEFINCKDMAESRDCQDNYMMTNCAAFCSC).

The protein belongs to the CRISP family. As to expression, expressed by the venom gland.

Its subcellular location is the secreted. In terms of biological role, blocks contraction of smooth muscle elicited by high potassium-induced depolarization, but does not block caffeine-stimulated contraction. May target voltage-gated calcium channels on smooth muscle. The sequence is that of Cysteine-rich venom protein Cau1 from Causus rhombeatus (Rhombic night adder).